A 340-amino-acid polypeptide reads, in one-letter code: Cytochrome c peroxidase, mitochondrial (340 aa).

A mitochondrion-targeting transit peptide spans 1–17; that stretch reads MRSFRAVRNFSTTAKRL. Histidine 101 (proton acceptor) is an active-site residue. Positions 175–198 are disordered; the sequence is WKRGRVDEPESASPPDGSLPDASQ. A heme b-binding site is contributed by histidine 224. Residue tryptophan 240 is the Tryptophan radical intermediate of the active site.

This sequence belongs to the peroxidase family. Cytochrome c peroxidase subfamily. Forms a one-to-one complex with cytochrome c. The cofactor is heme b.

Its subcellular location is the mitochondrion matrix. The protein resides in the mitochondrion intermembrane space. The catalysed reaction is 2 Fe(II)-[cytochrome c] + H2O2 + 2 H(+) = 2 Fe(III)-[cytochrome c] + 2 H2O. Its function is as follows. Destroys radicals which are normally produced within the cells and which are toxic to biological systems. The polypeptide is Cytochrome c peroxidase, mitochondrial (CCP1) (Yarrowia lipolytica (strain CLIB 122 / E 150) (Yeast)).